Consider the following 130-residue polypeptide: Cytochrome b-c1 complex subunit 7 (130 aa).

The protein belongs to the UQCRB/QCR7 family. In terms of assembly, component of the ubiquinol-cytochrome c oxidoreductase (cytochrome b-c1 complex, complex III, CIII), a multisubunit enzyme composed of 3 respiratory subunits cytochrome b, cytochrome c1 and Rieske protein, 2 core protein subunits, and additional low-molecular weight protein subunits. The complex exists as an obligatory dimer and forms supercomplexes (SCs) in the inner mitochondrial membrane with cytochrome c oxidase (complex IV, CIV).

The protein localises to the mitochondrion inner membrane. Its function is as follows. Component of the ubiquinol-cytochrome c oxidoreductase, a multisubunit transmembrane complex that is part of the mitochondrial electron transport chain which drives oxidative phosphorylation. The respiratory chain contains 3 multisubunit complexes succinate dehydrogenase (complex II, CII), ubiquinol-cytochrome c oxidoreductase (cytochrome b-c1 complex, complex III, CIII) and cytochrome c oxidase (complex IV, CIV), that cooperate to transfer electrons derived from NADH and succinate to molecular oxygen, creating an electrochemical gradient over the inner membrane that drives transmembrane transport and the ATP synthase. The cytochrome b-c1 complex catalyzes electron transfer from ubiquinol to cytochrome c, linking this redox reaction to translocation of protons across the mitochondrial inner membrane, with protons being carried across the membrane as hydrogens on the quinol. In the process called Q cycle, 2 protons are consumed from the matrix, 4 protons are released into the intermembrane space and 2 electrons are passed to cytochrome c. The sequence is that of Cytochrome b-c1 complex subunit 7 from Schistosoma mansoni (Blood fluke).